The chain runs to 221 residues: Ribosomal RNA small subunit methyltransferase G (221 aa).

Residues Gly78, Phe83, and Arg150 each coordinate S-adenosyl-L-methionine.

The protein belongs to the methyltransferase superfamily. RNA methyltransferase RsmG family.

It is found in the cytoplasm. Specifically methylates the N7 position of a guanine in 16S rRNA. This is Ribosomal RNA small subunit methyltransferase G from Bifidobacterium longum (strain DJO10A).